The primary structure comprises 338 residues: Bifunctional methylenetetrahydrofolate dehydrogenase/cyclohydrolase 2, mitochondrial (338 aa).

Residues 89–93 (YVRNK) and 136–138 (VQL) each bind substrate. NAD(+) is bound by residues 205–207 (GRS) and R238. Substrate is bound at residue 314-318 (PGGVG).

Belongs to the tetrahydrofolate dehydrogenase/cyclohydrolase family. It depends on Mg(2+) as a cofactor. In terms of tissue distribution, widely expressed.

It is found in the mitochondrion inner membrane. The enzyme catalyses (6R)-5,10-methylene-5,6,7,8-tetrahydrofolate + NAD(+) = (6R)-5,10-methenyltetrahydrofolate + NADH. It carries out the reaction (6R)-5,10-methenyltetrahydrofolate + H2O = (6R)-10-formyltetrahydrofolate + H(+). It catalyses the reaction (6R)-5,10-methylene-5,6,7,8-tetrahydrofolate + NADP(+) = (6R)-5,10-methenyltetrahydrofolate + NADPH. Its pathway is one-carbon metabolism; tetrahydrofolate interconversion. Its function is as follows. Bifunctional mitochondrial folate-interconverting enzyme that has both NAD/NADP-dependent methylenetetrahydrofolate dehydrogenase and methenyltetrahydrofolate cyclohydrolase activities. This chain is Bifunctional methylenetetrahydrofolate dehydrogenase/cyclohydrolase 2, mitochondrial, found in Mus musculus (Mouse).